The chain runs to 343 residues: Heat-inducible transcription repressor HrcA (343 aa).

Belongs to the HrcA family.

Functionally, negative regulator of class I heat shock genes (grpE-dnaK-dnaJ and groELS operons). Prevents heat-shock induction of these operons. The polypeptide is Heat-inducible transcription repressor HrcA (Bacillus cytotoxicus (strain DSM 22905 / CIP 110041 / 391-98 / NVH 391-98)).